Here is a 272-residue protein sequence, read N- to C-terminus: Shikimate dehydrogenase (NADP(+)) (272 aa).

Shikimate-binding positions include 14 to 16 and threonine 61; that span reads SKS. The active-site Proton acceptor is the lysine 65. An NADP(+)-binding site is contributed by glutamate 77. Residues asparagine 86 and aspartate 102 each contribute to the shikimate site. NADP(+) contacts are provided by residues 126-130, 149-154, and methionine 213; these read GAGGA and NRTVSR. Tyrosine 215 contributes to the shikimate binding site. Residue glycine 237 participates in NADP(+) binding.

It belongs to the shikimate dehydrogenase family. In terms of assembly, homodimer.

It carries out the reaction shikimate + NADP(+) = 3-dehydroshikimate + NADPH + H(+). The protein operates within metabolic intermediate biosynthesis; chorismate biosynthesis; chorismate from D-erythrose 4-phosphate and phosphoenolpyruvate: step 4/7. In terms of biological role, involved in the biosynthesis of the chorismate, which leads to the biosynthesis of aromatic amino acids. Catalyzes the reversible NADPH linked reduction of 3-dehydroshikimate (DHSA) to yield shikimate (SA). This chain is Shikimate dehydrogenase (NADP(+)), found in Shigella sonnei (strain Ss046).